The following is a 429-amino-acid chain: Glucose-1-phosphate adenylyltransferase (429 aa).

Alpha-D-glucose 1-phosphate contacts are provided by residues Y116, G181, 196-197 (EK), and S214.

This sequence belongs to the bacterial/plant glucose-1-phosphate adenylyltransferase family. As to quaternary structure, homotetramer.

It carries out the reaction alpha-D-glucose 1-phosphate + ATP + H(+) = ADP-alpha-D-glucose + diphosphate. The protein operates within glycan biosynthesis; glycogen biosynthesis. Functionally, involved in the biosynthesis of ADP-glucose, a building block required for the elongation reactions to produce glycogen. Catalyzes the reaction between ATP and alpha-D-glucose 1-phosphate (G1P) to produce pyrophosphate and ADP-Glc. This is Glucose-1-phosphate adenylyltransferase from Paramagnetospirillum magneticum (strain ATCC 700264 / AMB-1) (Magnetospirillum magneticum).